A 658-amino-acid chain; its full sequence is Threonine--tRNA ligase (658 aa).

Positions 1 to 61 (MSDVRVIIQR…KDGETVEAVE (61 aa)) constitute a TGS domain. The catalytic stretch occupies residues 259–554 (DHRKLGSELD…LLEHYAGAMP (296 aa)). Residues Cys353, His404, and His531 each contribute to the Zn(2+) site.

This sequence belongs to the class-II aminoacyl-tRNA synthetase family. In terms of assembly, homodimer. Zn(2+) serves as cofactor.

Its subcellular location is the cytoplasm. The catalysed reaction is tRNA(Thr) + L-threonine + ATP = L-threonyl-tRNA(Thr) + AMP + diphosphate + H(+). Catalyzes the attachment of threonine to tRNA(Thr) in a two-step reaction: L-threonine is first activated by ATP to form Thr-AMP and then transferred to the acceptor end of tRNA(Thr). Also edits incorrectly charged L-seryl-tRNA(Thr). In Streptomyces coelicolor (strain ATCC BAA-471 / A3(2) / M145), this protein is Threonine--tRNA ligase.